A 195-amino-acid polypeptide reads, in one-letter code: Probable WRKY transcription factor 56 (195 aa).

Residues 1–10 (MEGVDNTNPM) are compositionally biased toward polar residues. Disordered stretches follow at residues 1–20 (MEGV…ENNN) and 70–93 (EMGG…KGKG). Residues 108–173 (SDDDVLDDGY…YEGVHNHPCE (66 aa)) constitute a DNA-binding region (WRKY).

The protein belongs to the WRKY group II-c family.

Its subcellular location is the nucleus. Its function is as follows. Transcription factor. Interacts specifically with the W box (5'-(T)TGAC[CT]-3'), a frequently occurring elicitor-responsive cis-acting element. The chain is Probable WRKY transcription factor 56 (WRKY56) from Arabidopsis thaliana (Mouse-ear cress).